A 990-amino-acid chain; its full sequence is Bifunctional glutamine synthetase adenylyltransferase/adenylyl-removing enzyme (990 aa).

Positions 1–474 (MIFSAITADL…HYAKLFEGDP (474 aa)) are adenylyl removase. The adenylyl transferase stretch occupies residues 478 to 990 (AKLPPVDYGA…FNRLIGGEDA (513 aa)).

Belongs to the GlnE family. Mg(2+) is required as a cofactor.

The enzyme catalyses [glutamine synthetase]-O(4)-(5'-adenylyl)-L-tyrosine + phosphate = [glutamine synthetase]-L-tyrosine + ADP. It catalyses the reaction [glutamine synthetase]-L-tyrosine + ATP = [glutamine synthetase]-O(4)-(5'-adenylyl)-L-tyrosine + diphosphate. Involved in the regulation of glutamine synthetase GlnA, a key enzyme in the process to assimilate ammonia. When cellular nitrogen levels are high, the C-terminal adenylyl transferase (AT) inactivates GlnA by covalent transfer of an adenylyl group from ATP to specific tyrosine residue of GlnA, thus reducing its activity. Conversely, when nitrogen levels are low, the N-terminal adenylyl removase (AR) activates GlnA by removing the adenylyl group by phosphorolysis, increasing its activity. The regulatory region of GlnE binds the signal transduction protein PII (GlnB) which indicates the nitrogen status of the cell. This chain is Bifunctional glutamine synthetase adenylyltransferase/adenylyl-removing enzyme, found in Rhodopseudomonas palustris (strain TIE-1).